The sequence spans 370 residues: tRNA 2-selenouridine synthase (370 aa).

The 125-residue stretch at 12–136 (FLDDVPMMDM…MRTFLLETTQ (125 aa)) folds into the Rhodanese domain. Residue C95 is the S-selanylcysteine intermediate of the active site.

This sequence belongs to the SelU family. As to quaternary structure, monomer.

The catalysed reaction is 5-methylaminomethyl-2-thiouridine(34) in tRNA + selenophosphate + (2E)-geranyl diphosphate + H2O + H(+) = 5-methylaminomethyl-2-selenouridine(34) in tRNA + (2E)-thiogeraniol + phosphate + diphosphate. It carries out the reaction 5-methylaminomethyl-2-thiouridine(34) in tRNA + (2E)-geranyl diphosphate = 5-methylaminomethyl-S-(2E)-geranyl-thiouridine(34) in tRNA + diphosphate. The enzyme catalyses 5-methylaminomethyl-S-(2E)-geranyl-thiouridine(34) in tRNA + selenophosphate + H(+) = 5-methylaminomethyl-2-(Se-phospho)selenouridine(34) in tRNA + (2E)-thiogeraniol. It catalyses the reaction 5-methylaminomethyl-2-(Se-phospho)selenouridine(34) in tRNA + H2O = 5-methylaminomethyl-2-selenouridine(34) in tRNA + phosphate. In terms of biological role, involved in the post-transcriptional modification of the uridine at the wobble position (U34) of tRNA(Lys), tRNA(Glu) and tRNA(Gln). Catalyzes the conversion of 2-thiouridine (S2U-RNA) to 2-selenouridine (Se2U-RNA). Acts in a two-step process involving geranylation of 2-thiouridine (S2U) to S-geranyl-2-thiouridine (geS2U) and subsequent selenation of the latter derivative to 2-selenouridine (Se2U) in the tRNA chain. This Pseudomonas putida (strain ATCC 700007 / DSM 6899 / JCM 31910 / BCRC 17059 / LMG 24140 / F1) protein is tRNA 2-selenouridine synthase.